The chain runs to 251 residues: Triosephosphate isomerase (251 aa).

Substrate is bound at residue 9–11; sequence NWK. Residue His95 is the Electrophile of the active site. Glu167 (proton acceptor) is an active-site residue. Substrate is bound by residues Gly173, Ser213, and 234-235; that span reads GG.

It belongs to the triosephosphate isomerase family. As to quaternary structure, homodimer.

The protein localises to the cytoplasm. It catalyses the reaction D-glyceraldehyde 3-phosphate = dihydroxyacetone phosphate. It participates in carbohydrate biosynthesis; gluconeogenesis. The protein operates within carbohydrate degradation; glycolysis; D-glyceraldehyde 3-phosphate from glycerone phosphate: step 1/1. In terms of biological role, involved in the gluconeogenesis. Catalyzes stereospecifically the conversion of dihydroxyacetone phosphate (DHAP) to D-glyceraldehyde-3-phosphate (G3P). The protein is Triosephosphate isomerase of Trichlorobacter lovleyi (strain ATCC BAA-1151 / DSM 17278 / SZ) (Geobacter lovleyi).